We begin with the raw amino-acid sequence, 129 residues long: Small ribosomal subunit protein uS12 (129 aa).

Asp89 is modified (3-methylthioaspartic acid). Positions 101–129 are disordered; the sequence is SLDTSGVADRKQSRSKYGAKQPKAGAAKK. The segment covering 116 to 129 has biased composition (low complexity); the sequence is KYGAKQPKAGAAKK.

The protein belongs to the universal ribosomal protein uS12 family. Part of the 30S ribosomal subunit. Contacts proteins S8 and S17. May interact with IF1 in the 30S initiation complex.

Functionally, with S4 and S5 plays an important role in translational accuracy. Interacts with and stabilizes bases of the 16S rRNA that are involved in tRNA selection in the A site and with the mRNA backbone. Located at the interface of the 30S and 50S subunits, it traverses the body of the 30S subunit contacting proteins on the other side and probably holding the rRNA structure together. The combined cluster of proteins S8, S12 and S17 appears to hold together the shoulder and platform of the 30S subunit. This chain is Small ribosomal subunit protein uS12, found in Chlorobaculum parvum (strain DSM 263 / NCIMB 8327) (Chlorobium vibrioforme subsp. thiosulfatophilum).